We begin with the raw amino-acid sequence, 97 residues long: Aspartyl/glutamyl-tRNA(Asn/Gln) amidotransferase subunit C (97 aa).

It belongs to the GatC family. Heterotrimer of A, B and C subunits.

The catalysed reaction is L-glutamyl-tRNA(Gln) + L-glutamine + ATP + H2O = L-glutaminyl-tRNA(Gln) + L-glutamate + ADP + phosphate + H(+). The enzyme catalyses L-aspartyl-tRNA(Asn) + L-glutamine + ATP + H2O = L-asparaginyl-tRNA(Asn) + L-glutamate + ADP + phosphate + 2 H(+). In terms of biological role, allows the formation of correctly charged Asn-tRNA(Asn) or Gln-tRNA(Gln) through the transamidation of misacylated Asp-tRNA(Asn) or Glu-tRNA(Gln) in organisms which lack either or both of asparaginyl-tRNA or glutaminyl-tRNA synthetases. The reaction takes place in the presence of glutamine and ATP through an activated phospho-Asp-tRNA(Asn) or phospho-Glu-tRNA(Gln). This Nostoc punctiforme (strain ATCC 29133 / PCC 73102) protein is Aspartyl/glutamyl-tRNA(Asn/Gln) amidotransferase subunit C.